The sequence spans 202 residues: Urease accessory protein UreG (202 aa).

11 to 18 is a GTP binding site; it reads GPVGSGKT.

Belongs to the SIMIBI class G3E GTPase family. UreG subfamily. In terms of assembly, homodimer. UreD, UreF and UreG form a complex that acts as a GTP-hydrolysis-dependent molecular chaperone, activating the urease apoprotein by helping to assemble the nickel containing metallocenter of UreC. The UreE protein probably delivers the nickel.

The protein resides in the cytoplasm. Facilitates the functional incorporation of the urease nickel metallocenter. This process requires GTP hydrolysis, probably effectuated by UreG. This is Urease accessory protein UreG from Magnetococcus marinus (strain ATCC BAA-1437 / JCM 17883 / MC-1).